A 528-amino-acid chain; its full sequence is Low affinity inorganic phosphate transporter 4 (528 aa).

The Cytoplasmic portion of the chain corresponds to 1 to 18; that stretch reads MALEVLEALDSARTQWYH. Residues 19–39 form a helical membrane-spanning segment; sequence VTAIVIAGMGFFTDAYDLFCI. Residues 40–68 lie on the Extracellular side of the membrane; sequence TTVSKLLGRLYYFDPSTGKPGKLPNNVNN. The helical transmembrane segment at 69-89 threads the bilayer; sequence LVTGVALVGTLSGQLFFGYLG. Residues 90 to 96 are Cytoplasmic-facing; that stretch reads DKLGRKK. A helical transmembrane segment spans residues 97–117; it reads VYGVTLILMVACAICSGLSFG. Residues 118 to 122 lie on the Extracellular side of the membrane; sequence ASAKS. Residues 123-143 form a helical membrane-spanning segment; that stretch reads VMGTLCFFRFWLGFGIGGDYP. The Cytoplasmic segment spans residues 144 to 158; the sequence is LSATIMSEYANKRTR. Residues 159–179 traverse the membrane as a helical segment; that stretch reads GAFIAAVFAMQGVGIIFAGLV. Residues 180–208 are Extracellular-facing; that stretch reads SMCLSAGFKASYHAPSFHDDPIMSTQPQG. A helical membrane pass occupies residues 209-229; it reads DLMWRLVLMIGAVPAAMTYYW. Residues 230 to 292 are Cytoplasmic-facing; that stretch reads RMKMPETGRY…NEFFTRHGRH (63 aa). Residues 293-313 form a helical membrane-spanning segment; the sequence is LIGTMTSWFLLDIAFYSQNLT. Topologically, residues 314-341 are extracellular; it reads QKDIFPAMGLIDKDFEMNAIQEVFETSR. The chain crosses the membrane as a helical span at residues 342–362; sequence AMFVIALFGTFPGYWFTVFFI. Over 363–371 the chain is Cytoplasmic; sequence EKLGRYKIQ. The helical transmembrane segment at 372–392 threads the bilayer; it reads LIGFFMMSVFMFIIGVKYDYL. Over 393–401 the chain is Extracellular; it reads RNENSHMFA. The chain crosses the membrane as a helical span at residues 402 to 422; sequence LLYGLTFFFANFGPNSTTFVL. Residues 423–433 lie on the Cytoplasmic side of the membrane; that stretch reads PAELFPTRVRS. A helical membrane pass occupies residues 434-454; it reads TCHALSAAAGKAGAMVGAFGI. The Extracellular segment spans residues 455–467; the sequence is QNYTQKGEQKQIK. An N-linked (GlcNAc...) asparagine glycan is attached at Asn-456. A helical membrane pass occupies residues 468-488; sequence HAMMILAVTNLIGFFCSFLVT. Over 489-528 the chain is Cytoplasmic; sequence ETKGRSLEEISGEDGRESELTPTPPNNRVPTRQEPRSETM. 2 stretches are compositionally biased toward basic and acidic residues: residues 496 to 507 and 519 to 528; these read EEISGEDGRESE and TRQEPRSETM. The disordered stretch occupies residues 496–528; that stretch reads EEISGEDGRESELTPTPPNNRVPTRQEPRSETM.

Belongs to the major facilitator superfamily. Phosphate:H(+) symporter (TC 2.A.1.9) family. In terms of tissue distribution, expressed only in mycorrhizal roots, exclusively in cortical cells containing arbuscules, upon arbuscular mycorrhizal (AM) symbiosis with AM fungi (e.g. Gigaspora margarita and Funnelliformis mosseae). Also observed in root tips of non-mycorrhizal roots, in a phosphate (Pi) depended-manner, highest expression levels being observed in low Pi conditions.

The protein resides in the cell membrane. It catalyses the reaction phosphate(in) + H(+)(in) = phosphate(out) + H(+)(out). Low-affinity transporter for external inorganic phosphate (Pi) probably involved in the acquisition of phosphate released by arbuscular mycorrhizal (AM) fungi (e.g. Gigaspora margarita and Funnelliformis mosseae) during AM symbiosis; required for propper mycorrhizal arbuscule morphology. Acts as a Pi-sensing machinery at the root tip level, independently of AM fungi, involved in the regulation of early root branching and lateral roots formation. This is Low affinity inorganic phosphate transporter 4 from Lotus japonicus (Lotus corniculatus var. japonicus).